The chain runs to 131 residues: Small capsomere-interacting protein (131 aa).

It belongs to the herpesviridae small capsomere-interacting protein family. As to quaternary structure, interacts with the major capsid protein/MCP.

It localises to the virion. Its subcellular location is the host nucleus. Functionally, participates in the assembly of the infectious particles by decorating the outer surface of the capsid shell and thus forming a layer between the capsid and the tegument. Complexes composed of the major capsid protein and small capsomere-interacting protein/SCP assemble together in the host cytoplasm and are translocated to the nucleus, where they accumulate and participate in capsid assembly. The protein is Small capsomere-interacting protein of Gallus gallus (Chicken).